Reading from the N-terminus, the 163-residue chain is Nucleotide-binding protein YPDSF_2805 (163 aa).

It belongs to the YajQ family.

Nucleotide-binding protein. The sequence is that of Nucleotide-binding protein YPDSF_2805 from Yersinia pestis (strain Pestoides F).